The sequence spans 435 residues: Nuclear hormone receptor family member nhr-28 (435 aa).

Residues 5–80 constitute a DNA-binding region (nuclear receptor); it reads KKPCSVCGEA…VGMRKSAVQR (76 aa). NR C4-type zinc fingers lie at residues 8–28 and 44–63; these read CSVC…CRAC and CRAM…CRAC. Residues 84–106 form a disordered region; that stretch reads LFGRQDSSDGSNPRVSPSTSWPM. The span at 91–104 shows a compositional bias: polar residues; that stretch reads SDGSNPRVSPSTSW. The NR LBD domain maps to 113–374; sequence IEEPGMATLN…ETFYELVSGR (262 aa).

This sequence belongs to the nuclear hormone receptor family.

The protein resides in the nucleus. Its function is as follows. Orphan nuclear receptor. The sequence is that of Nuclear hormone receptor family member nhr-28 from Caenorhabditis briggsae.